The following is a 219-amino-acid chain: 2-hydroxy-3-keto-5-methylthiopentenyl-1-phosphate phosphatase (219 aa).

The protein belongs to the HAD-like hydrolase superfamily. MtnX family.

It carries out the reaction 2-hydroxy-5-methylsulfanyl-3-oxopent-1-enyl phosphate + H2O = 1,2-dihydroxy-5-(methylsulfanyl)pent-1-en-3-one + phosphate. Its pathway is amino-acid biosynthesis; L-methionine biosynthesis via salvage pathway; L-methionine from S-methyl-5-thio-alpha-D-ribose 1-phosphate: step 4/6. Dephosphorylates 2-hydroxy-3-keto-5-methylthiopentenyl-1-phosphate (HK-MTPenyl-1-P) yielding 1,2-dihydroxy-3-keto-5-methylthiopentene (DHK-MTPene). The protein is 2-hydroxy-3-keto-5-methylthiopentenyl-1-phosphate phosphatase of Bacillus cereus (strain AH187).